The sequence spans 166 residues: Antibacterial peptide PMAP-36 (166 aa).

The first 29 residues, Met-1–Ala-29, serve as a signal peptide directing secretion. Residues Gln-30–Ser-129 constitute a propeptide that is removed on maturation. Intrachain disulfides connect Cys-85–Cys-96 and Cys-107–Cys-124.

The protein belongs to the cathelicidin family.

It localises to the secreted. In terms of biological role, exerts antimicrobial activity against both Gram-positive and negative bacteria. Its activity appears to be mediated by its ability to damage bacterial membranes. The protein is Antibacterial peptide PMAP-36 (PMAP36) of Sus scrofa (Pig).